A 386-amino-acid chain; its full sequence is Prostacyclin receptor (386 aa).

At 1-16 the chain is on the extracellular side; that stretch reads MADSCRNLTYVRGSVG. Cystine bridges form between Cys5–Cys165 and Cys92–Cys170. Residue Asn7 is glycosylated (N-linked (GlcNAc...) asparagine). Residues 17-38 traverse the membrane as a helical segment; the sequence is PATSTLMFVAGVVGNGLALGIL. Topologically, residues 39 to 51 are cytoplasmic; it reads SARRPARPSAFAV. Residues 52–76 traverse the membrane as a helical segment; the sequence is LVTGLAATDLLGTSFLSPAVFVAYA. Residues 77-94 lie on the Extracellular side of the membrane; the sequence is RNSSLLGLARGGPALCDA. The helical transmembrane segment at 95–115 threads the bilayer; sequence FAFAMTFFGLASMLILFAMAV. Residues 116 to 134 are Cytoplasmic-facing; sequence ERCLALSHPYLYAQLDGPR. A helical membrane pass occupies residues 135–158; that stretch reads CARLALPAIYAFCVLFCALPLLGL. The Extracellular segment spans residues 159–181; it reads GQHQQYCPGSWCFLRMRWAQPGG. Residues 182–208 form a helical membrane-spanning segment; the sequence is AAFSLAYAGLVALLVAAIFLCNGSVTL. The Cytoplasmic segment spans residues 209 to 235; that stretch reads SLCRMYRQQKRHQGSLGPRPRTGEDEV. The helical transmembrane segment at 236–260 threads the bilayer; the sequence is DHLILLALMTVVMAVCSLPLTIRCF. At 261-274 the chain is on the extracellular side; the sequence is TQAVAPDSSSEMGD. The helical transmembrane segment at 275–295 threads the bilayer; it reads LLAFRFYAFNPILDPWVFILF. At 296–386 the chain is on the cytoplasmic side; it reads RKAVFQRLKL…AEASVACSLC (91 aa). The disordered stretch occupies residues 322-376; that stretch reads PLSQLASGRRDPRAPSAPVGKEGSCVPLSAWGEGQVEPLPPTQQSSGSAVGTSSK. The segment covering 363–376 has biased composition (polar residues); it reads TQQSSGSAVGTSSK. Cys383 carries the cysteine methyl ester modification. Cys383 carries S-farnesyl cysteine lipidation. Residues 384–386 constitute a propeptide, removed in mature form; sequence SLC.

This sequence belongs to the G-protein coupled receptor 1 family. In terms of assembly, interacts (non-isoprenylated C-terminus) with PDZK1. In terms of processing, isoprenylation does not influence ligand binding but is required for efficient coupling to the effectors adenylyl cyclase and phospholipase C.

The protein resides in the cell membrane. In terms of biological role, receptor for prostacyclin (prostaglandin I2 or PGI2). The activity of this receptor is mediated by G(s) proteins which activate adenylate cyclase. This is Prostacyclin receptor (PTGIR) from Homo sapiens (Human).